We begin with the raw amino-acid sequence, 488 residues long: Germacrene A hydroxylase (488 aa).

Residues 1 to 6 (MELSIT) are Cytoplasmic-facing. The helical; Signal-anchor for type II membrane protein transmembrane segment at 7 to 23 (TSIALATIVFFLYKLAT) threads the bilayer. Over 24-488 (RPKSTKKQLP…KTELLLVPSF (465 aa)) the chain is Lumenal. Residues asparagine 169, asparagine 260, and asparagine 379 are each glycosylated (N-linked (GlcNAc...) asparagine). Cysteine 432 provides a ligand contact to heme.

This sequence belongs to the cytochrome P450 family. The cofactor is heme.

The protein localises to the endoplasmic reticulum membrane. The catalysed reaction is (+)-(R)-germacrene A + 3 reduced [NADPH--hemoprotein reductase] + 3 O2 = germacra-1(10),4,11(13)-trien-12-oate + 3 oxidized [NADPH--hemoprotein reductase] + 4 H2O + 4 H(+). Its pathway is secondary metabolite biosynthesis; terpenoid biosynthesis. In terms of biological role, involved in the biosynthesis of germacrene-derived sesquiterpene lactones. Catalyzes three consecutive oxidations of germacrene A to produce germacrene A acid. Could also catalyze the three-step oxidation of non-natural substrate amorphadiene to artemisinic acid. The sequence is that of Germacrene A hydroxylase from Lactuca sativa (Garden lettuce).